The primary structure comprises 79 residues: Cytochrome b (79 aa).

Helical transmembrane passes span 1 to 7 (TALFLAM), 31 to 52 (WLIRNMHANGASFLFICIYLHI), and 67 to 79 (WNIGVILLLLTMM). 2 residues coordinate heme b: H37 and H51.

Belongs to the cytochrome b family. In terms of assembly, the cytochrome bc1 complex contains 3 respiratory subunits (MT-CYB, CYC1 and UQCRFS1), 2 core proteins (UQCRC1 and UQCRC2) and probably 6 low-molecular weight proteins. Heme b is required as a cofactor.

The protein localises to the mitochondrion inner membrane. Functionally, component of the ubiquinol-cytochrome c reductase complex (complex III or cytochrome b-c1 complex) that is part of the mitochondrial respiratory chain. The b-c1 complex mediates electron transfer from ubiquinol to cytochrome c. Contributes to the generation of a proton gradient across the mitochondrial membrane that is then used for ATP synthesis. This is Cytochrome b (mt-cyb) from Julidochromis regani (Convict julie).